A 681-amino-acid chain; its full sequence is Potassium-transporting ATPase ATP-binding subunit (681 aa).

Helical transmembrane passes span 30 to 50 (LLVY…FFGI), 59 to 79 (LAIA…EAIA), 216 to 236 (ILLV…LPFT), and 255 to 275 (IALL…SIGI). D306 (4-aspartylphosphate intermediate) is an active-site residue. ATP contacts are provided by residues D343, E347, 376–383 (FTATTRMS), and K394. Mg(2+) is bound by residues D517 and D521. 3 helical membrane passes run 587–607 (FAII…LNLM), 615–635 (AILS…PLSL), and 661–681 (LIAP…LGIV).

It belongs to the cation transport ATPase (P-type) (TC 3.A.3) family. Type IA subfamily. In terms of assembly, the system is composed of three essential subunits: KdpA, KdpB and KdpC.

The protein localises to the cell membrane. The enzyme catalyses K(+)(out) + ATP + H2O = K(+)(in) + ADP + phosphate + H(+). Its function is as follows. Part of the high-affinity ATP-driven potassium transport (or Kdp) system, which catalyzes the hydrolysis of ATP coupled with the electrogenic transport of potassium into the cytoplasm. This subunit is responsible for energy coupling to the transport system and for the release of the potassium ions to the cytoplasm. This chain is Potassium-transporting ATPase ATP-binding subunit, found in Listeria monocytogenes serotype 4a (strain HCC23).